We begin with the raw amino-acid sequence, 643 residues long: E3 ubiquitin-protein ligase Praja-1 (643 aa).

The tract at residues 1 to 363 (MGQESSKPVW…SDDYYKYCDE (363 aa)) is disordered. Composition is skewed to basic and acidic residues over residues 95–105 (DYSRYPPREYR), 145–158 (KFKD…EKGA), and 173–183 (RDVREERDKLD). Residues 200 to 209 (QSSVASQSSS) show a composition bias toward low complexity. The span at 213 to 227 (LATKGDSSERERREQ) shows a compositional bias: basic and acidic residues. At S265 the chain carries Phosphoserine. T277 is subject to Phosphothreonine. 2 stretches are compositionally biased toward basic and acidic residues: residues 289 to 310 (RWRD…RGRG) and 320 to 362 (KYPE…KYCD). Residues S365 and S367 each carry the phosphoserine modification. Residues 380 to 454 (RSREQTLSSS…REPSLQEEQA (75 aa)) form a disordered region. A compositionally biased stretch (low complexity) spans 410–439 (SASTGTSPGPGASASAGAGAGASAGSNGSN). The segment at 595-636 (CPICCSEYVKGEVATELPCHHYFHKPCVSIWLQKSGTCPVCR) adopts an RING-type zinc-finger fold.

As to quaternary structure, binds ubiquitin-conjugating enzymes (E2s). In vitro, interacts with the ubiquitin-conjugating enzyme, UBE2D2. Post-translationally, substrate for E2-dependent ubiquitination. As to expression, expressed in various regions of the brain including the cerebellum, cerebral cortex, medulla, occipital pole, frontal lobe, temporal lobe and putamen. Highest levels in the cerebral cortex.

It catalyses the reaction S-ubiquitinyl-[E2 ubiquitin-conjugating enzyme]-L-cysteine + [acceptor protein]-L-lysine = [E2 ubiquitin-conjugating enzyme]-L-cysteine + N(6)-ubiquitinyl-[acceptor protein]-L-lysine.. Has E2-dependent E3 ubiquitin-protein ligase activity. Ubiquitinates MAGED1 antigen leading to its subsequent degradation by proteasome. May be involved in protein sorting. The protein is E3 ubiquitin-protein ligase Praja-1 (PJA1) of Homo sapiens (Human).